Reading from the N-terminus, the 180-residue chain is PRA1 family protein F1 (180 aa).

A run of 4 helical transmembrane segments spans residues 63–83 (ANTV…VFLS), 84–104 (LIWN…WLFL), 123–143 (IVLI…DAKL), and 145–165 (IAVA…VRKT).

This sequence belongs to the PRA1 family. Interacts with PRA1F2. As to expression, expressed in hypocotyls, leaf bases and shoot apex.

It is found in the endosome membrane. Its function is as follows. May be involved in both secretory and endocytic intracellular trafficking in the endosomal/prevacuolar compartments. In Arabidopsis thaliana (Mouse-ear cress), this protein is PRA1 family protein F1 (PRA1F1).